Reading from the N-terminus, the 137-residue chain is Leaf-specific thionin (137 aa).

A signal peptide spans 1–28 (MATNKSIKSVVICVLILGLVLEQVQVEA). 4 disulfides stabilise this stretch: Cys31-Cys68, Cys32-Cys60, Cys40-Cys58, and Cys44-Cys54. A propeptide spans 75–137 (LNLLPESGEP…DGEVIQSVEA (63 aa)) (acidic domain).

This sequence belongs to the plant thionin (TC 1.C.44) family. 4 C-C subfamily.

Its subcellular location is the secreted. Thionins are small plant proteins which are toxic to animal cells. They seem to exert their toxic effect at the level of the cell membrane. Their precise function is not known. In Hordeum vulgare (Barley), this protein is Leaf-specific thionin (THI1.5).